We begin with the raw amino-acid sequence, 108 residues long: Small ribosomal subunit protein eS25x (108 aa).

The interval 1–36 (MAPKKDKVPPPSSKPAKSGGGKQKKKKWSKGKQKEK) is disordered. Residues 22–31 (KQKKKKWSKG) show a composition bias toward basic residues.

Belongs to the eukaryotic ribosomal protein eS25 family.

This Arabidopsis thaliana (Mouse-ear cress) protein is Small ribosomal subunit protein eS25x (RPS25D).